A 168-amino-acid polypeptide reads, in one-letter code: Small ribosomal subunit protein uS5 (168 aa).

In terms of domain architecture, S5 DRBM spans 13–76 (IQEKLVAVRR…ENARRNMISV (64 aa)).

It belongs to the universal ribosomal protein uS5 family. In terms of assembly, part of the 30S ribosomal subunit. Contacts proteins S4 and S8.

In terms of biological role, with S4 and S12 plays an important role in translational accuracy. Functionally, located at the back of the 30S subunit body where it stabilizes the conformation of the head with respect to the body. This Coxiella burnetii (strain RSA 493 / Nine Mile phase I) protein is Small ribosomal subunit protein uS5.